A 162-amino-acid polypeptide reads, in one-letter code: Protein-export protein SecB (162 aa).

Belongs to the SecB family. As to quaternary structure, homotetramer, a dimer of dimers. One homotetramer interacts with 1 SecA dimer.

The protein localises to the cytoplasm. In terms of biological role, one of the proteins required for the normal export of preproteins out of the cell cytoplasm. It is a molecular chaperone that binds to a subset of precursor proteins, maintaining them in a translocation-competent state. It also specifically binds to its receptor SecA. This Legionella pneumophila subsp. pneumophila (strain Philadelphia 1 / ATCC 33152 / DSM 7513) protein is Protein-export protein SecB.